The following is a 231-amino-acid chain: 4-aminobenzoate synthase (231 aa).

The Fe(2+) site is built by Glu-81, His-88, Glu-142, His-174, Asp-178, and His-181.

It belongs to the CADD family. As to quaternary structure, homodimer. During infection, interacts with death domains of mammalian tumor necrosis factor (TNF) family receptors Fas, DR4, DR5 and to some extent TNFR1, but not with the respective downstream adapters. Fe(2+) serves as cofactor. Mn(2+) is required as a cofactor.

The protein localises to the secreted. It localises to the host cytoplasm. Its activity is regulated as follows. The protein is a cosubstrate rather than a true enzyme and is left in an inactive state after a single turnover. Inactive under anaerobic conditions. In terms of biological role, involved in de novo para-aminobenzoate (PABA) biosynthesis. Acts as a self-sacrificing or 'suicide' enzyme that utilizes its own active site tyrosine residue(s) as the substrate for PABA synthesis. The side chain of the tyrosine residue is released from the protein backbone via cleavage of the C(alpha)-C(beta) bond, leaving a glycine in place of the original tyrosine residue. Reaction requires O(2) and a reduced dimetal cofactor. Was also identified as a specific toxin that associates with death domains of tumor necrosis factor family (TNF) receptors and induces apoptosis in mammalian cell lines through a Caspase-dependent mechanism. The sequence is that of 4-aminobenzoate synthase from Chlamydia trachomatis serovar D (strain ATCC VR-885 / DSM 19411 / UW-3/Cx).